The chain runs to 433 residues: 2,2-dialkylglycine decarboxylase (433 aa).

Lys272 carries the post-translational modification N6-(pyridoxal phosphate)lysine.

It belongs to the class-III pyridoxal-phosphate-dependent aminotransferase family. As to quaternary structure, homotetramer. Requires pyridoxal 5'-phosphate as cofactor.

The enzyme catalyses 2,2-dialkylglycine + pyruvate + H(+) = dialkyl ketone + L-alanine + CO2. The dialkylglycine decarboxylase is of interest because it normally catalyzes both decarboxylation and amino transfer. It may be more properly described as a decarboxylating aminotransferase rather than an aminotransferring decarboxylase. The chain is 2,2-dialkylglycine decarboxylase (dgdA) from Burkholderia cepacia (Pseudomonas cepacia).